We begin with the raw amino-acid sequence, 592 residues long: Transducer of Cdc42-dependent actin assembly protein 1 homolog (592 aa).

One can recognise an F-BAR domain in the interval 3-267; the sequence is DSCSWDQLWD…DIGLIDPSRD (265 aa). 2 disordered regions span residues 343-366 and 447-519; these read FGGG…QQRA and SATS…DELY. The 78-residue stretch at 359-436 folds into the REM-1 domain; sequence TLPPQQRARK…IQKFKILLDD (78 aa). Residues 363–441 are a coiled coil; sequence QQRARKIAGK…ILLDDVNAQL (79 aa). A compositionally biased stretch (polar residues) spans 447-457; it reads SATSVGGSDTP. Residues 459–474 show a composition bias toward low complexity; it reads SIRSVSSASSGVTSRV. Polar residues predominate over residues 495-510; sequence FSGSNGGSDTDPTING. Residues 527–589 form the SH3 domain; it reads PVLGEAIAQF…PSSYLKVTWF (63 aa).

This sequence belongs to the FNBP1 family. In terms of assembly, interacts (via SH3 domain) with wsp-1. Interacts with cdc-42 and (via SH3 domain) with wve-1. As to expression, expressed in the germline and specifically in the gonads.

The protein localises to the cell junction. The protein resides in the apical cell membrane. It is found in the basolateral cell membrane. It localises to the cytoplasmic vesicle. Its subcellular location is the cytoplasm. The protein localises to the perinuclear region. The protein resides in the recycling endosome. Functionally, plays a role in protein trafficking, actin organization and embryonic morphogenesis. Potentially acts as a cdc-42 effector. May play a role in hypodermal P-cell nuclear positioning. Together with toca-2, is required for protein trafficking regulating yolk protein clathrin-mediated endocytosis by oocytes during oogenesis and retrograde recycling and the sorting of recycling endosome cargo proteins such as mig-14. Also, together with toca-2, controls the distribution of actin at cell junctions. The protein is Transducer of Cdc42-dependent actin assembly protein 1 homolog of Caenorhabditis elegans.